Consider the following 226-residue polypeptide: Ribonuclease 3 (226 aa).

Residues 7–134 (KQNLKKKYGI…FNGALFLDQG (128 aa)) enclose the RNase III domain. Residue E47 coordinates Mg(2+). Residue D51 is part of the active site. Residues D120 and E123 each contribute to the Mg(2+) site. The active site involves E123. The 67-residue stretch at 160 to 226 (DYKTELQERL…AAQAALDKNK (67 aa)) folds into the DRBM domain. Residues 201 to 226 (KVSEGQGRNKKAAEQQAAQAALDKNK) form a disordered region. Low complexity predominate over residues 214-226 (EQQAAQAALDKNK).

It belongs to the ribonuclease III family. Homodimer. It depends on Mg(2+) as a cofactor.

It is found in the cytoplasm. The enzyme catalyses Endonucleolytic cleavage to 5'-phosphomonoester.. Its function is as follows. Digests double-stranded RNA. Involved in the processing of primary rRNA transcript to yield the immediate precursors to the large and small rRNAs (23S and 16S). Processes some mRNAs, and tRNAs when they are encoded in the rRNA operon. Processes pre-crRNA and tracrRNA of type II CRISPR loci if present in the organism. This is Ribonuclease 3 from Lactobacillus johnsonii (strain CNCM I-12250 / La1 / NCC 533).